The primary structure comprises 470 residues: Argininosuccinate lyase (470 aa).

It belongs to the lyase 1 family. Argininosuccinate lyase subfamily.

The protein resides in the cytoplasm. The catalysed reaction is 2-(N(omega)-L-arginino)succinate = fumarate + L-arginine. It functions in the pathway amino-acid biosynthesis; L-arginine biosynthesis; L-arginine from L-ornithine and carbamoyl phosphate: step 3/3. This is Argininosuccinate lyase from Mycobacterium marinum (strain ATCC BAA-535 / M).